The primary structure comprises 279 residues: Urease accessory protein UreD (279 aa).

Belongs to the UreD family. As to quaternary structure, ureD, UreF and UreG form a complex that acts as a GTP-hydrolysis-dependent molecular chaperone, activating the urease apoprotein by helping to assemble the nickel containing metallocenter of UreC. The UreE protein probably delivers the nickel.

It is found in the cytoplasm. Its function is as follows. Required for maturation of urease via the functional incorporation of the urease nickel metallocenter. The protein is Urease accessory protein UreD of Rhodopseudomonas palustris (strain HaA2).